A 258-amino-acid polypeptide reads, in one-letter code: MSRHPSDRKVYVGDLGNNARKNDLEYVFGAYGSLRSVWIARNPPGFAFVEFESARDAADAVRGLDGRTVCGRRARVELSTGKYARSGGGGGGGGGGGGGGGLGGRDRGGGGRGDDKCYECGGRGHFARHCRERKARQRRRSNSFSRSRSTSRRRRTRSKSGTRSRSRSAGSVGRRSGRSNGRDENGSASRYSDHERNGSGAVDSPPPPKRRYEDEDDDRVRGSPRSRSRSRSASPAVRRGSPPRRRGDSSASRSVSRD.

The RRM domain maps to 8–81 (RKVYVGDLGN…RRARVELSTG (74 aa)). Disordered regions lie at residues 81–113 (GKYA…GGRG) and 130–258 (CRER…VSRD). Gly residues predominate over residues 86-103 (SGGGGGGGGGGGGGGGLG). The span at 104–113 (GRDRGGGGRG) shows a compositional bias: basic and acidic residues. Residues 116-132 (KCYECGGRGHFARHCRE) form a CCHC-type zinc finger. Composition is skewed to basic residues over residues 130 to 141 (CRERKARQRRRS) and 149 to 166 (STSR…RSRS). Basic and acidic residues-rich tracts occupy residues 180–197 (NGRD…HERN) and 210–221 (RRYEDEDDDRVR). 2 stretches are compositionally biased toward low complexity: residues 231 to 240 (RSASPAVRRG) and 249 to 258 (SSASRSVSRD).

In terms of assembly, interacts (via Arg/Ser-rich region) with Alsin2/CG7564, Rbp1 and Doa (via N-terminus). Highly phosphorylated. May be phosphorylated by the serine/threonine-protein kinase Doa.

The protein localises to the nucleus. Functionally, serine/arginine-rich splicing factor (SR protein) involved in differential exon usage during RNA transcript processing, probably by binding exonic splicing enhancer elements and recruiting components of the splicing machinery. Binds RNA stem-loop structures with consensus sequence 5'-CCGUNUNKNW-3'. Regulator of genes involved in lipid and carbohydrate metabolism, the immune response and the response to xenobiotics. The sequence is that of Serine/arginine-rich splicing factor x16 from Drosophila melanogaster (Fruit fly).